The chain runs to 417 residues: Acetyltransferase cdmC (417 aa).

Asn-64 carries an N-linked (GlcNAc...) asparagine glycan. 3 helical membrane-spanning segments follow: residues 308-328, 357-377, and 389-409; these read IPDG…GYLV, GIFW…YPLL, and LVES…AFIL.

This sequence belongs to the wax synthase family.

It localises to the membrane. It carries out the reaction chrodrimanin A + acetyl-CoA = chrodrimanin B + CoA. Its pathway is secondary metabolite biosynthesis; terpenoid biosynthesis. In terms of biological role, acetyltransferase; part of the gene cluster that mediates the biosynthesis of chrodrimanin B, a meroterpenoid that acts as a potent blocker of insect GABA-gated chloride channels. The first step of the pathway is the biosynthesis of 6-hydroxymellein by the polyketide synthase cdmE. The prenyltransferase cdmH acts as a 6-hydroxymellein 5-farnesyltransferase and produces the hydrophobic metabolite verruculide C. The FAD-dependent monooxygenase cdmI further converts verruculide C into verruculide B. The terpene cyclase cdmG then produced the pentacyclic molecule 3-hydroxypentacecilide A, the backbone structure of chrodrimanin B, via folding the farnesyl moiety of the substrate into the chair-boat conformation. The short-chain dehydrogenase/reductase cdmF functions as the 3-OH dehydrogenase that oxidizes the C-3 hydroxyl group of 3-hydroxypentacecilide A and produces chrodrimanin C, the dehydrogenated product of 3-hydroxypentacecilide A. The cytochrome P450 monooxygenase cdmJ then accepts both 3-hydroxypentacecilide A and chrodrimanin C and functions as a C-7-beta-hydroxylase to produce respectively chrodrimanin H and chrodrimanin F. The dioxygenase cdmA accepts chrodrimanin H to afford chrodrimanin E, which is further transformed to chrodrimanin A by the dioxygenase cdmD. CdmA can also accept chrodrimanin C as substrate to convert it into verruculide A, which is further converted into chrodrimanin T by cdmD. The last step of the biosynthesis is proposed to be performed by the acetyltransferase cdmC which acetylates chrodrimanin A to yield chrodrimanin B. The pathway may also lead to the production of additional shunt products, including chrodrimanins T and U. In Talaromyces verruculosus (Penicillium verruculosum), this protein is Acetyltransferase cdmC.